A 417-amino-acid chain; its full sequence is Carboxypeptidase B (417 aa).

The signal sequence occupies residues 1–15; sequence MLALLVLVTVALASA. Positions 16–110 are cleaved as a propeptide — activation peptide; the sequence is HHGGEHFEGE…VEAQFDSRVR (95 aa). One can recognise a Peptidase M14 domain in the interval 118–412; the sequence is KYNKWETIEA…LAIKYVASYV (295 aa). Cysteines 173 and 186 form a disulfide. Zn(2+) is bound by residues H176 and E179. Substrate-binding positions include 176–179, R234, and 251–252; these read HARE and NR. Intrachain disulfides connect C245/C268 and C259/C273. H304 lines the Zn(2+) pocket. Substrate-binding positions include 305–306 and Y356; that span reads SY. The Proton donor/acceptor role is filled by E378.

The protein belongs to the peptidase M14 family. It depends on Zn(2+) as a cofactor. As to expression, pancreas.

It localises to the secreted. Its subcellular location is the zymogen granule lumen. The enzyme catalyses Preferential release of a C-terminal lysine or arginine amino acid.. This Homo sapiens (Human) protein is Carboxypeptidase B (CPB1).